Reading from the N-terminus, the 90-residue chain is MSRALFAVVLAFPLIALANPHYRPDVEVNVPPEVFSSGGQSAQPCTQCCVYQDQNYSEGAVIKAEGILLQCQRDDKTLSTNPLVWRRVKP.

Positions 1–18 (MSRALFAVVLAFPLIALA) are cleaved as a signal peptide.

This is an uncharacterized protein from Escherichia coli (strain K12).